Consider the following 290-residue polypeptide: Fructose-1,6-bisphosphatase class 1 (290 aa).

Mg(2+) is bound by residues E78, D96, L98, and D99. Substrate-binding positions include 99–102 (DGSS), Y201, and K226. E232 lines the Mg(2+) pocket.

It belongs to the FBPase class 1 family. Homotetramer. Mg(2+) serves as cofactor.

It localises to the cytoplasm. It carries out the reaction beta-D-fructose 1,6-bisphosphate + H2O = beta-D-fructose 6-phosphate + phosphate. It functions in the pathway carbohydrate biosynthesis; gluconeogenesis. In Helicobacter pylori (strain G27), this protein is Fructose-1,6-bisphosphatase class 1.